The following is a 255-amino-acid chain: MKTIAVNSFKGGTAKTSTTLHLGAALAQYHKARVLLIDFDAQANLTAGLGLDPDCYDSLAVVLQGEKQISEVIRSIDSSGLDLIPADTWLERVEVSGSLAADRYSHERLKTILSTIEHQYDYVIIDTPPSLCWLTESALIAAQHALICATPEFYSVKGLERLATFIQGISSRHPLNILGVTLSFWNYRGKNNAAFTELIQKTFPGKLLNTRIRRDITISEAAIHGKPVFSTAPSARASEDYLKLTEELLFLLRDI.

This sequence belongs to the ParA family.

This Chlamydia muridarum (strain MoPn / Nigg) protein is ParA family protein TC_0871.